The sequence spans 84 residues: Large ribosomal subunit protein bL27 (84 aa).

A disordered region spans residues 1–22; it reads MAHKKGGGSTKNGRDSNPKYLG.

It belongs to the bacterial ribosomal protein bL27 family.

This chain is Large ribosomal subunit protein bL27, found in Prosthecochloris aestuarii (strain DSM 271 / SK 413).